A 421-amino-acid polypeptide reads, in one-letter code: UDP-N-acetylglucosamine 1-carboxyvinyltransferase (421 aa).

Lysine 22–asparagine 23 is a binding site for phosphoenolpyruvate. Arginine 93 lines the UDP-N-acetyl-alpha-D-glucosamine pocket. Cysteine 117 (proton donor) is an active-site residue. At cysteine 117 the chain carries 2-(S-cysteinyl)pyruvic acid O-phosphothioketal. UDP-N-acetyl-alpha-D-glucosamine-binding positions include arginine 122–leucine 126, aspartate 308, and valine 330.

The protein belongs to the EPSP synthase family. MurA subfamily.

Its subcellular location is the cytoplasm. The enzyme catalyses phosphoenolpyruvate + UDP-N-acetyl-alpha-D-glucosamine = UDP-N-acetyl-3-O-(1-carboxyvinyl)-alpha-D-glucosamine + phosphate. Its pathway is cell wall biogenesis; peptidoglycan biosynthesis. Its function is as follows. Cell wall formation. Adds enolpyruvyl to UDP-N-acetylglucosamine. The polypeptide is UDP-N-acetylglucosamine 1-carboxyvinyltransferase (Ectopseudomonas mendocina (strain ymp) (Pseudomonas mendocina)).